Here is a 260-residue protein sequence, read N- to C-terminus: MKTSDYLKKYGVKLKKHLGQVFLSDDRIAKRIVKEVGLTPEDVVVEIGAGAGTLTEELAKTGARVIAYEIDESLAPVLRERLSKYPNVELRFEDFLKAKDIPEGAICVSNIPYSITGPIMEKIIEWKFKRAIVMVQKEVGERILAKPGKKTYGYLSVVVQTFYEVKKLFDVSRSCFVPNPEVDSTVVDLRRKSVDLDFEKFRKFVSMIFAKKRKTLKNNLRPFLSVFEGVDLSRRAEQLTVEEIVEFYEKWRRALECSKE.

The S-adenosyl-L-methionine site is built by leucine 23, glycine 48, glutamate 69, aspartate 94, and asparagine 110.

The protein belongs to the class I-like SAM-binding methyltransferase superfamily. rRNA adenine N(6)-methyltransferase family. RsmA subfamily.

It localises to the cytoplasm. The enzyme catalyses adenosine(1518)/adenosine(1519) in 16S rRNA + 4 S-adenosyl-L-methionine = N(6)-dimethyladenosine(1518)/N(6)-dimethyladenosine(1519) in 16S rRNA + 4 S-adenosyl-L-homocysteine + 4 H(+). Functionally, specifically dimethylates two adjacent adenosines (A1518 and A1519) in the loop of a conserved hairpin near the 3'-end of 16S rRNA in the 30S particle. May play a critical role in biogenesis of 30S subunits. The polypeptide is Ribosomal RNA small subunit methyltransferase A (Thermotoga petrophila (strain ATCC BAA-488 / DSM 13995 / JCM 10881 / RKU-1)).